The primary structure comprises 131 residues: Fumarate reductase subunit C (131 aa).

2 helical membrane passes run phenylalanine 60 to alanine 80 and isoleucine 110 to phenylalanine 130.

This sequence belongs to the FrdC family. As to quaternary structure, part of an enzyme complex containing four subunits: a flavoprotein (FrdA), an iron-sulfur protein (FrdB), and two hydrophobic anchor proteins (FrdC and FrdD).

Its subcellular location is the cell inner membrane. Its function is as follows. Two distinct, membrane-bound, FAD-containing enzymes are responsible for the catalysis of fumarate and succinate interconversion; fumarate reductase is used in anaerobic growth, and succinate dehydrogenase is used in aerobic growth. Anchors the catalytic components of the fumarate reductase complex to the cell inner membrane, binds quinones. The chain is Fumarate reductase subunit C from Enterobacter sp. (strain 638).